A 107-amino-acid chain; its full sequence is Sperm-specific class P protein 34 (107 aa).

Positions 1–26 are disordered; that stretch reads MINVDPPTGNYPATGGNSTHNITSES. One can recognise an MSP domain in the interval 1 to 107; the sequence is MINVDPPTGN…GEIIVKLIAA (107 aa). Residues 15 to 25 show a composition bias toward polar residues; it reads GGNSTHNITSE.

As to expression, expressed at higher level in testis.

The protein is Sperm-specific class P protein 34 (ssp-34) of Caenorhabditis elegans.